Reading from the N-terminus, the 367-residue chain is Protein RIC-3 (367 aa).

The N-terminal stretch at 1-31 (MAYSTVQRVALASGLVLAVSLLLPKAFLSRG) is a signal peptide. The segment at 30-67 (RGKRPEPPPGPEGKLDRFPPMMHHHSAPSDGQTPGARF) is disordered. The Lumenal segment spans residues 32–95 (KRPEPPPGPE…AGGGGSGRGL (64 aa)). A helical membrane pass occupies residues 96-116 (MGQIIPIYGFGIFLYILYILF). Over 117-367 (KLSKGKTAED…LRKRNPQGFE (251 aa)) the chain is Cytoplasmic. A coiled-coil region spans residues 138 to 169 (HRKITNFELVQLQEKLKETEEAMEKLINRVGP). K201 carries the N6-acetyllysine; alternate modification. A Glycyl lysine isopeptide (Lys-Gly) (interchain with G-Cter in ubiquitin); alternate cross-link involves residue K201. Disordered regions lie at residues 262 to 301 (QMGEIEEEGSERLSWDHLPTDPGAQKDNSVAPCDPKPESC) and 322 to 367 (ADGY…QGFE). Positions 271 to 280 (SERLSWDHLP) are enriched in basic and acidic residues. A compositionally biased stretch (basic residues) spans 358 to 367 (LRKRNPQGFE).

The protein belongs to the ric-3 family. In terms of assembly, monomer and homodimer. Interacts with CHRNA7, CHRNA3, CHRNA4, CHRNB2, CHRNB4 and HTR3A. In terms of tissue distribution, expressed in brain, with highest levels in hippocampus, cerebellum and superior colliculus.

Its subcellular location is the endoplasmic reticulum membrane. Molecular chaperone which promotes the proper subunit assembly and surface trafficking of alpha-7 (CHRNA7) nicotinic acetylcholine receptor. Promotes the proper subunit assembly and cell surface expression of alpha-8 (CHRNA8) nicotinic acetylcholine receptor. May also promote functional expression of homomeric serotoninergic 5-HT3 receptors, and of heteromeric acetylcholine receptors alpha-3/beta-2, alpha-3/beta-4, alpha-4/beta-2 and alpha-4/beta-4. The polypeptide is Protein RIC-3 (Ric3) (Mus musculus (Mouse)).